A 194-amino-acid polypeptide reads, in one-letter code: Metalloproteinase inhibitor 2 (194 aa).

A Zn(2+)-binding site is contributed by Cys-1. Involved in metalloproteinase-binding regions lie at residues 1–4 (CSCS) and 69–70 (SA). 6 cysteine pairs are disulfide-bonded: Cys-1–Cys-72, Cys-3–Cys-101, Cys-13–Cys-126, Cys-128–Cys-175, Cys-133–Cys-138, and Cys-146–Cys-167. The NTR domain occupies 1–126 (CSCSPVHPQQ…SLNHRYQMGC (126 aa)).

The protein belongs to the protease inhibitor I35 (TIMP) family. Interacts (via the C-terminal) with MMP2 (via the C-terminal PEX domain); the interaction inhibits the MMP2 activity. The activity of TIMP2 is dependent on the presence of disulfide bonds.

The protein resides in the secreted. Its function is as follows. Complexes with metalloproteinases (such as collagenases) and irreversibly inactivates them by binding to their catalytic zinc cofactor. The protein is Metalloproteinase inhibitor 2 (TIMP2) of Oryctolagus cuniculus (Rabbit).